The chain runs to 283 residues: ATP phosphoribosyltransferase (283 aa).

This sequence belongs to the ATP phosphoribosyltransferase family. Long subfamily. Mg(2+) serves as cofactor.

The protein resides in the cytoplasm. The enzyme catalyses 1-(5-phospho-beta-D-ribosyl)-ATP + diphosphate = 5-phospho-alpha-D-ribose 1-diphosphate + ATP. It participates in amino-acid biosynthesis; L-histidine biosynthesis; L-histidine from 5-phospho-alpha-D-ribose 1-diphosphate: step 1/9. Feedback inhibited by histidine. Its function is as follows. Catalyzes the condensation of ATP and 5-phosphoribose 1-diphosphate to form N'-(5'-phosphoribosyl)-ATP (PR-ATP). Has a crucial role in the pathway because the rate of histidine biosynthesis seems to be controlled primarily by regulation of HisG enzymatic activity. The polypeptide is ATP phosphoribosyltransferase (Ignicoccus hospitalis (strain KIN4/I / DSM 18386 / JCM 14125)).